Consider the following 421-residue polypeptide: Histidine--tRNA ligase (421 aa).

Belongs to the class-II aminoacyl-tRNA synthetase family. As to quaternary structure, homodimer.

It is found in the cytoplasm. The enzyme catalyses tRNA(His) + L-histidine + ATP = L-histidyl-tRNA(His) + AMP + diphosphate + H(+). The chain is Histidine--tRNA ligase from Coxiella burnetii (strain CbuK_Q154) (Coxiella burnetii (strain Q154)).